A 316-amino-acid polypeptide reads, in one-letter code: Bifunctional peptidase and (3S)-lysyl hydroxylase Jmjd7 (316 aa).

The region spanning 128–307 (VQKQCSNLPT…LKYSYFQLMD (180 aa)) is the JmjC domain. Fe cation is bound by residues His178, Asp180, and His277.

In terms of assembly, homodimer; disulfide-linked. Interacts with DRG1 and DRG2. Requires Fe(2+) as cofactor.

Its subcellular location is the nucleus. The protein localises to the cytoplasm. The catalysed reaction is L-lysyl-[protein] + 2-oxoglutarate + O2 = (3S)-3-hydroxy-L-lysyl-[protein] + succinate + CO2. Functionally, bifunctional enzyme that acts both as an endopeptidase and 2-oxoglutarate-dependent monooxygenase. Endopeptidase that cleaves histones N-terminal tails at the carboxyl side of methylated arginine or lysine residues, to generate 'tailless nucleosomes', which may trigger transcription elongation. Preferentially recognizes and cleaves monomethylated and dimethylated arginine residues of histones H2, H3 and H4. After initial cleavage, continues to digest histones tails via its aminopeptidase activity. Additionally, may play a role in protein biosynthesis by modifying the translation machinery. Acts as a Fe(2+) and 2-oxoglutarate-dependent monooxygenase, catalyzing (S)-stereospecific hydroxylation at C-3 of 'Lys-22' of DRG1 and 'Lys-21' of DRG2 translation factors (TRAFAC), promoting their interaction with ribonucleic acids (RNA). In Mus musculus (Mouse), this protein is Bifunctional peptidase and (3S)-lysyl hydroxylase Jmjd7.